The primary structure comprises 351 residues: Protein Tex24 (351 aa).

3 disordered regions span residues 69 to 101, 117 to 144, and 275 to 298; these read PSTAHGKRKPGHLPRLRSSAVKGHAPDPNPSLS, PEDRQTFVGPSGLPKISPKATAGEAQGK, and EKVKPSSHDMHLSTAERSFKPKSM. The segment covering 73–83 has biased composition (basic residues); sequence HGKRKPGHLPR. The segment covering 275–285 has biased composition (basic and acidic residues); that stretch reads EKVKPSSHDMH.

Specific to testis, where it is expressed in spermatogonia.

The protein resides in the nucleus. Its function is as follows. Nuclear factor which might have a role in spermatogenesis. The protein is Protein Tex24 of Mus musculus (Mouse).